The following is a 235-amino-acid chain: Large ribosomal subunit protein uL1 (235 aa).

The protein belongs to the universal ribosomal protein uL1 family. In terms of assembly, part of the 50S ribosomal subunit.

In terms of biological role, binds directly to 23S rRNA. The L1 stalk is quite mobile in the ribosome, and is involved in E site tRNA release. Protein L1 is also a translational repressor protein, it controls the translation of the L11 operon by binding to its mRNA. This chain is Large ribosomal subunit protein uL1, found in Synechococcus sp. (strain WH7803).